Here is a 265-residue protein sequence, read N- to C-terminus: Homeobox protein CDX-1 (265 aa).

The disordered stretch occupies residues lysine 9–arginine 152. The segment covering tyrosine 30 to proline 43 has biased composition (pro residues). Low complexity predominate over residues alanine 73 to phenylalanine 92. Residues glycine 93–glycine 108 show a composition bias toward pro residues. The span at glycine 110 to glycine 126 shows a compositional bias: low complexity. A DNA-binding region (homeobox) is located at residues lysine 154 to asparagine 213. Positions tyrosine 157–tyrosine 178 are interaction with DNA. Residues arginine 196–alanine 207 form an interaction with 5-mCpG DNA region. Residues arginine 206 to glutamine 217 show a composition bias toward basic residues. A disordered region spans residues arginine 206–proline 265. The span at proline 245–proline 256 shows a compositional bias: polar residues.

The protein belongs to the Caudal homeobox family.

It localises to the nucleus. Its function is as follows. Plays a role in transcriptional regulation. Involved in activated KRAS-mediated transcriptional activation of PRKD1 in colorectal cancer (CRC) cells. Binds to the PRKD1 promoter in colorectal cancer (CRC) cells. Could play a role in the terminal differentiation of the intestine. Binds preferentially to methylated DNA. The polypeptide is Homeobox protein CDX-1 (CDX1) (Pongo pygmaeus (Bornean orangutan)).